A 1207-amino-acid polypeptide reads, in one-letter code: DNA-directed RNA polymerase subunit beta' (1207 aa).

Zn(2+) contacts are provided by Cys60, Cys62, Cys75, and Cys78. Mg(2+) contacts are provided by Asp449, Asp451, and Asp453. 4 residues coordinate Zn(2+): Cys822, Cys896, Cys903, and Cys906.

This sequence belongs to the RNA polymerase beta' chain family. The RNAP catalytic core consists of 2 alpha, 1 beta, 1 beta' and 1 omega subunit. When a sigma factor is associated with the core the holoenzyme is formed, which can initiate transcription. Mg(2+) serves as cofactor. Requires Zn(2+) as cofactor.

The catalysed reaction is RNA(n) + a ribonucleoside 5'-triphosphate = RNA(n+1) + diphosphate. Functionally, DNA-dependent RNA polymerase catalyzes the transcription of DNA into RNA using the four ribonucleoside triphosphates as substrates. The polypeptide is DNA-directed RNA polymerase subunit beta' (Staphylococcus aureus (strain NCTC 8325 / PS 47)).